The sequence spans 209 residues: 2-phospho-L-lactate guanylyltransferase (209 aa).

Belongs to the CofC family. As to quaternary structure, homodimer.

It carries out the reaction (2S)-2-phospholactate + GTP + H(+) = (2S)-lactyl-2-diphospho-5'-guanosine + diphosphate. It participates in cofactor biosynthesis; coenzyme F420 biosynthesis. Functionally, guanylyltransferase that catalyzes the activation of (2S)-2-phospholactate (2-PL) as (2S)-lactyl-2-diphospho-5'-guanosine, via the condensation of 2-PL with GTP. It is involved in the biosynthesis of coenzyme F420, a hydride carrier cofactor. This is 2-phospho-L-lactate guanylyltransferase from Halobacterium salinarum (strain ATCC 29341 / DSM 671 / R1).